Consider the following 309-residue polypeptide: Large ribosomal subunit protein mL45 (309 aa).

The protein belongs to the mitochondrion-specific ribosomal protein mL45 family. In terms of assembly, component of the mitochondrial ribosome large subunit (39S) which comprises a 16S rRNA and about 50 distinct proteins.

Its subcellular location is the mitochondrion. Component of the mitochondrial large ribosomal subunit (mt-LSU). Within the mitochondrial ribosomes, required to direct the nascent polypeptide toward the tunnel exit and position the exit at a distance from the membrane surface. This Xenopus tropicalis (Western clawed frog) protein is Large ribosomal subunit protein mL45 (mrpl45).